A 645-amino-acid polypeptide reads, in one-letter code: MTSRPITPLLDTIRGPSDTRGLSVAQLEQLAREVRAEMIDAVSVTGGHLGSGLGVVELTVALHHVFDTPDDRIIWDVGHQCYPHKILTGRRDRIRTLRQGGGLSGFTLREESPYDPFGAGHSSTSISAGLGMAIGSALAGDARDVVAVIGDGSMSAGMAYEAMNNAGAAKSRLIVILNDNDMSIAPPVGAMSAYLSRLLSSKSWLSIRTLAKEIVARLPDALERTAKRAEEYARGMVTGGGTLFEEMGFYYVGPIDGHRMDHLVPVLRNVREAGRDGPVLIHVVTQKGKGYAPAENAPDKYHGVSRFNVVTGVQEKAKPQAPSYTAVFGKQLVAAAAKDHRIVAVTAAMPGGTGLDKLAAAYPQRCFDVGIAEQHAVTFAAGLACEGLKPFVALYSSFLQRGYDQVVHDVVLQKLPVRFAIDRAGFVGADGATHGGVFDMAFLGCLPNLVVMCAADEAELARMVVTAAGHDSGPIALRYPRGEGVGVEIPEDPQPLAIGKGRIVREGKGVALLSIGTRLQSCLEACEILAARGLTPTVADARFLKPFDEELVADLAARHEVLIVVEEGAIGGFCSHVATWLANQGLLDGGLKLRALHIPDRFFEHDAPEVQCAKAGIDAQAITTAVLDALKLETSATIDAGALKA.

Thiamine diphosphate-binding positions include histidine 79 and 120–122; that span reads GHS. Aspartate 151 provides a ligand contact to Mg(2+). Residues 152 to 153, asparagine 180, tyrosine 291, and glutamate 373 contribute to the thiamine diphosphate site; that span reads GS. Residue asparagine 180 participates in Mg(2+) binding.

Belongs to the transketolase family. DXPS subfamily. Homodimer. Mg(2+) is required as a cofactor. Requires thiamine diphosphate as cofactor.

The enzyme catalyses D-glyceraldehyde 3-phosphate + pyruvate + H(+) = 1-deoxy-D-xylulose 5-phosphate + CO2. Its pathway is metabolic intermediate biosynthesis; 1-deoxy-D-xylulose 5-phosphate biosynthesis; 1-deoxy-D-xylulose 5-phosphate from D-glyceraldehyde 3-phosphate and pyruvate: step 1/1. In terms of biological role, catalyzes the acyloin condensation reaction between C atoms 2 and 3 of pyruvate and glyceraldehyde 3-phosphate to yield 1-deoxy-D-xylulose-5-phosphate (DXP). In Rhodospirillum rubrum (strain ATCC 11170 / ATH 1.1.1 / DSM 467 / LMG 4362 / NCIMB 8255 / S1), this protein is 1-deoxy-D-xylulose-5-phosphate synthase 2.